A 105-amino-acid polypeptide reads, in one-letter code: Precursor of CEP15 (105 aa).

The signal sequence occupies residues 1–29 (MDATKIKFDVILLSFLLIISGIPSNLGLS). The propeptide occupies 30 to 90 (TSVRGTTRSE…PSPPVPDYDD (61 aa)). Residues 68-80 (DYYDGGSSSSTTS) show a composition bias toward low complexity. The interval 68-105 (DYYDGGSSSSTTSPSPPVPDYDDIYRRQGDVPSPGIGH) is disordered. A hydroxyproline mark is found at Pro-99 and Pro-101.

The protein belongs to the C-terminally encoded plant signaling peptide (CEP) family. Interacts with CEP receptors (e.g. CEPR1 and CEPR2). The mature small signaling peptide is generated by proteolytic processing of the longer precursor.

Its subcellular location is the secreted. It localises to the extracellular space. It is found in the apoplast. Its function is as follows. Extracellular signaling peptide that may regulate primary root growth rate and systemic nitrogen (N)-demand signaling. This is Precursor of CEP15 from Arabidopsis thaliana (Mouse-ear cress).